A 230-amino-acid polypeptide reads, in one-letter code: Orotidine 5'-phosphate decarboxylase (230 aa).

Residues Asp-10, Lys-32, 59 to 68 (DLKYHDIPNT), Thr-119, Arg-180, Gln-189, Gly-209, and Arg-210 contribute to the substrate site. The active-site Proton donor is the Lys-61.

It belongs to the OMP decarboxylase family. Type 1 subfamily. In terms of assembly, homodimer.

It catalyses the reaction orotidine 5'-phosphate + H(+) = UMP + CO2. Its pathway is pyrimidine metabolism; UMP biosynthesis via de novo pathway; UMP from orotate: step 2/2. Functionally, catalyzes the decarboxylation of orotidine 5'-monophosphate (OMP) to uridine 5'-monophosphate (UMP). This is Orotidine 5'-phosphate decarboxylase from Haemophilus ducreyi (strain 35000HP / ATCC 700724).